The chain runs to 140 residues: Photosystem I reaction center subunit XI (140 aa).

A run of 3 helical transmembrane segments spans residues 48-68 (LEIGMAHGYFLIGPFVQLGPL), 79-99 (LLSAIGLIVILTLGMLLYGAV), and 119-139 (SGFLLGAVGGAGFAYLLLTLF).

Belongs to the PsaL family.

It localises to the plastid. Its subcellular location is the chloroplast thylakoid membrane. This chain is Photosystem I reaction center subunit XI, found in Cyanidioschyzon merolae (strain NIES-3377 / 10D) (Unicellular red alga).